Reading from the N-terminus, the 519-residue chain is S-type anion channel SLAH2 (519 aa).

The tract at residues 1–31 is disordered; the sequence is MNNPRSVSPLVSPANHSDLLENQRQSGSGDF. Over 1-140 the chain is Cytoplasmic; that stretch reads MNNPRSVSPL…LPEDKTWPFL (140 aa). The span at 20–29 shows a compositional bias: polar residues; that stretch reads LENQRQSGSG. Residues serine 77 and serine 85 each carry the phosphoserine modification. Residues 141 to 161 traverse the membrane as a helical segment; that stretch reads LRFPITSYGMCLGVSSQAIMW. The Extracellular portion of the chain corresponds to 162-185; it reads KTLATTEAEKFLHVTQVINHVLWW. Residues 186 to 206 traverse the membrane as a helical segment; that stretch reads ISLLLLLAVSITYLFKTILFF. The Cytoplasmic portion of the chain corresponds to 207-220; that stretch reads EAVRREFRHPIRVN. The chain crosses the membrane as a helical span at residues 221 to 241; the sequence is FFFAPLISILFLALGIPHSII. Topologically, residues 242 to 247 are extracellular; the sequence is SHLPST. Residues 248 to 268 form a helical membrane-spanning segment; the sequence is LWYFLMAPILFLEMKIYGQWM. Over 269-281 the chain is Cytoplasmic; sequence SGGQRRLSKVANP. A helical membrane pass occupies residues 282-302; that stretch reads TNHLSIVGNFAGALLGASMGL. The Extracellular segment spans residues 303 to 304; the sequence is KE. A helical membrane pass occupies residues 305–325; the sequence is GPIFFFAIGLAYYLVLFVTLY. Residues 326–340 lie on the Cytoplasmic side of the membrane; the sequence is QRLPTNETLPKELHP. The helical transmembrane segment at 341–361 threads the bilayer; that stretch reads VFFLFVAAPAVASMAWTKISA. Residue serine 362 is a topological domain, extracellular. A helical transmembrane segment spans residues 363–383; it reads FDLGSRLAYFISLFLYFSLVC. Topologically, residues 384–389 are cytoplasmic; that stretch reads RINLFR. The chain crosses the membrane as a helical span at residues 390-410; sequence GFKFSLAWWAYTFPMTAVASA. At 411–424 the chain is on the extracellular side; the sequence is TIKYSDEVTGVATK. The chain crosses the membrane as a helical span at residues 425 to 445; sequence ILSVVMSGAATLTVIAVLGLT. Residues 446–519 lie on the Cytoplasmic side of the membrane; the sequence is VMHAFVQRDL…VDSSTVQNSN (74 aa). A disordered region spans residues 495 to 519; the sequence is PEDNQIDLESPPLVNVDSSTVQNSN. Polar residues predominate over residues 510 to 519; sequence VDSSTVQNSN.

It belongs to the SLAC1 S-type anion channel family. In terms of assembly, homotrimer. As to expression, expressed in lateral root primordia and tap root tips.

Its subcellular location is the cell membrane. Its function is as follows. Slow, weak voltage-dependent S-type anion efflux channel involved in maintenance of anion homeostasis. The sequence is that of S-type anion channel SLAH2 (SLAH2) from Arabidopsis thaliana (Mouse-ear cress).